Here is a 124-residue protein sequence, read N- to C-terminus: Protein MGF 110-5L (124 aa).

The N-terminal stretch at 1-28 (MLVIILGVIGLLANQVLGLPTQAGGHLR) is a signal peptide.

Belongs to the asfivirus MGF 110 family.

Functionally, plays a role in virus cell tropism, and may be required for efficient virus replication in macrophages. The chain is Protein MGF 110-5L from Ornithodoros (relapsing fever ticks).